Reading from the N-terminus, the 764-residue chain is Nucleolar transcription factor 1 (764 aa).

At Met-1 the chain carries N-acetylmethionine. Positions 1–21 (MNGEADCPTDLEMAAPKGQDR) are disordered. DNA-binding regions (HMG box) lie at residues 112 to 180 (PKKP…ARFR) and 196 to 264 (PEKP…RDYI). Thr-201 bears the Phosphothreonine mark. Phosphoserine occurs at positions 273, 336, 364, 389, 412, 433, 435, 484, 495, 546, 584, and 638. Positions 298 to 362 (TKPPPNSYSL…DYEVELLRFL (65 aa)) form a DNA-binding region, HMG box 3. Positions 381–411 (NINKKQATSPASKKPAQEGGKGGSEKPKRPV) are disordered. 3 DNA-binding regions (HMG box) span residues 407-475 (PKRP…GGER), 482-549 (PESP…SEMR), and 568-634 (KKPP…DLWV). The interval 459–487 (REAALKAQSERKPGGEREERGKLPESPKR) is disordered. The interval 546–576 (SEMRAPPAATNSSKKMKFQGEPKKPPMNGYQ) is disordered. A disordered region spans residues 648–764 (YISNKRKSMT…SGDSSDSDSN (117 aa)). A compositionally biased stretch (polar residues) spans 664–674 (PKSSRTTLQSK). Positions 677–745 (SEEDDEEDED…DDDEDEDNES (69 aa)) are enriched in acidic residues. Residues 746-758 (EGSSSSSSSSGDS) show a composition bias toward low complexity.

In terms of assembly, homodimer. Part of Pol I pre-initiation complex (PIC), in which Pol I core assembles with RRN3 and promoter-bound UTBF and SL1/TIF-IB complex. Interacts with TOP2A in the context of Pol I complex. Interacts with TBP. Interacts with TAF1A. Interacts with RASL11A. Binds to IRS1 and PIK3CA. Interacts with DHX33. Interacts with PHF6. Interacts with CEBPA (isoform 1 and isoform 4). Interacts with DDX11. Interacts with NOP53. Interacts with ALKBH2. Phosphorylated and activated by PIK3CA.

The protein localises to the nucleus. It is found in the nucleolus. Functionally, recognizes the ribosomal RNA gene promoter and activates transcription mediated by RNA polymerase I (Pol I) through cooperative interactions with the transcription factor SL1/TIF-IB complex. It binds specifically to the upstream control element and can activate Pol I promoter escape. The polypeptide is Nucleolar transcription factor 1 (UBTF) (Homo sapiens (Human)).